The primary structure comprises 454 residues: Phosphoglucosamine mutase (454 aa).

S104 (phosphoserine intermediate) is an active-site residue. Positions 104, 241, 243, and 245 each coordinate Mg(2+). Residue S104 is modified to Phosphoserine.

The protein belongs to the phosphohexose mutase family. It depends on Mg(2+) as a cofactor. In terms of processing, activated by phosphorylation.

It carries out the reaction alpha-D-glucosamine 1-phosphate = D-glucosamine 6-phosphate. Catalyzes the conversion of glucosamine-6-phosphate to glucosamine-1-phosphate. This Paenarthrobacter aurescens (strain TC1) protein is Phosphoglucosamine mutase.